A 364-amino-acid polypeptide reads, in one-letter code: UDP-N-acetylglucosamine--N-acetylmuramyl-(pentapeptide) pyrophosphoryl-undecaprenol N-acetylglucosamine transferase (364 aa).

UDP-N-acetyl-alpha-D-glucosamine-binding positions include 10 to 12 (TGG), N128, R170, S199, I250, and Q295.

The protein belongs to the glycosyltransferase 28 family. MurG subfamily.

It is found in the cell inner membrane. It carries out the reaction di-trans,octa-cis-undecaprenyl diphospho-N-acetyl-alpha-D-muramoyl-L-alanyl-D-glutamyl-meso-2,6-diaminopimeloyl-D-alanyl-D-alanine + UDP-N-acetyl-alpha-D-glucosamine = di-trans,octa-cis-undecaprenyl diphospho-[N-acetyl-alpha-D-glucosaminyl-(1-&gt;4)]-N-acetyl-alpha-D-muramoyl-L-alanyl-D-glutamyl-meso-2,6-diaminopimeloyl-D-alanyl-D-alanine + UDP + H(+). The protein operates within cell wall biogenesis; peptidoglycan biosynthesis. Functionally, cell wall formation. Catalyzes the transfer of a GlcNAc subunit on undecaprenyl-pyrophosphoryl-MurNAc-pentapeptide (lipid intermediate I) to form undecaprenyl-pyrophosphoryl-MurNAc-(pentapeptide)GlcNAc (lipid intermediate II). The sequence is that of UDP-N-acetylglucosamine--N-acetylmuramyl-(pentapeptide) pyrophosphoryl-undecaprenol N-acetylglucosamine transferase from Chlorobium limicola (strain DSM 245 / NBRC 103803 / 6330).